A 915-amino-acid chain; its full sequence is Alanine--tRNA ligase (915 aa).

Residues His605, His609, Cys709, and His713 each coordinate Zn(2+). The interval 882 to 901 is disordered; the sequence is GGGGDERLAQGGGRNPDGLT.

This sequence belongs to the class-II aminoacyl-tRNA synthetase family. Zn(2+) is required as a cofactor.

It is found in the cytoplasm. It carries out the reaction tRNA(Ala) + L-alanine + ATP = L-alanyl-tRNA(Ala) + AMP + diphosphate. In terms of biological role, catalyzes the attachment of alanine to tRNA(Ala) in a two-step reaction: alanine is first activated by ATP to form Ala-AMP and then transferred to the acceptor end of tRNA(Ala). Also edits incorrectly charged Ser-tRNA(Ala) and Gly-tRNA(Ala) via its editing domain. The chain is Alanine--tRNA ligase from Methanopyrus kandleri (strain AV19 / DSM 6324 / JCM 9639 / NBRC 100938).